The following is a 659-amino-acid chain: Cytochrome bo(3) ubiquinol oxidase subunit 1 (659 aa).

Topologically, residues 1–14 (MFGKLTLKAIPVDE) are extracellular. A helical transmembrane segment spans residues 15 to 35 (PIIMVTYISIILIALFISFSI). Residues 36–58 (TYFKKWKYLWYEWFTTVDHKKIS) lie on the Cytoplasmic side of the membrane. The chain crosses the membrane as a helical span at residues 59–79 (IMYGILAFIMLFRGFVDAILM). Positions 71, 75, and 98 each coordinate a ubiquinone. At 80-106 (RTQQVIASSGNTGFLPPHHYDQIFTAH) the chain is on the extracellular side. His-106 lines the heme b pocket. The helical transmembrane segment at 107–127 (GVIMIFFVAMPLVIGLMNLVV) threads the bilayer. Topologically, residues 128–145 (PLQIGARDVAFPFLNNLS) are cytoplasmic. Residues 146–166 (FWLNVSGAILLTLSLGIGEFA) form a helical membrane-spanning segment. Residues 167 to 189 (QTGWLAYPPLSEVKYSPGVGVDY) lie on the Extracellular side of the membrane. Residue Trp-170 participates in heme b binding. A helical transmembrane segment spans residues 190 to 210 (WIWSLQISGVGTTLTGINFLI). The Cytoplasmic portion of the chain corresponds to 211 to 225 (TILKMRAPGMCFFKM). A helical transmembrane segment spans residues 226 to 246 (PVFTWAALCTNILIVISFPVL). Residues 247–277 (TTTLLLLTLDRCFDFHFFTNNFGGNPMMYVN) lie on the Extracellular side of the membrane. A helical transmembrane segment spans residues 278–298 (LIWIWGHPEVYILVLPVFGVF). His-284 is a binding site for Cu(2+). A cross-link (1'-histidyl-3'-tyrosine (His-Tyr)) is located at residues 284–288 (HPEVY). Tyr-288 provides a ligand contact to Fe(II)-heme o. Residues 299–309 (SEVVATFSKKR) are Cytoplasmic-facing. A helical transmembrane segment spans residues 310–330 (LFGYVSLVWATLAITILSFIV). Residues 331 to 347 (WLHHFFTMGAGSNVNAF) lie on the Extracellular side of the membrane. Cu(2+)-binding residues include His-333 and His-334. The helical transmembrane segment at 348–368 (FGITTMIIAIPTGVKIFNWLF) threads the bilayer. Residues 369–380 (TMYQGRVHMHSS) lie on the Cytoplasmic side of the membrane. The helical transmembrane segment at 381-401 (MLWTIGFLITFSIGGMTGVLL) threads the bilayer. At 402–413 (SIPPADFILHNS) the chain is on the extracellular side. 2 residues coordinate Fe(II)-heme o: His-411 and His-419. Residues 414-434 (LFLVAHFHNVIIGGVVFGCFA) form a helical membrane-spanning segment. A heme b-binding site is contributed by His-421. At 435 to 456 (GINYWFPKLFGFILNELWGKRA) the chain is on the cytoplasmic side. The chain crosses the membrane as a helical span at residues 457-477 (FWFWIIGFFTAFMPLYFLGFM). The Extracellular portion of the chain corresponds to 478-490 (GMTRRLSQNIDIE). 2 residues coordinate heme b: Arg-481 and Arg-482. The helical transmembrane segment at 491–511 (FHFLLSIAAIGAILIGIGILC) threads the bilayer. At 512 to 580 (QIIQFWVSVR…KNQVQKKQYS (69 aa)) the chain is on the cytoplasmic side. The helical transmembrane segment at 581 to 601 (AIHMPKNTGLGIFISFFSLLF) threads the bilayer. At 602 to 605 (GFSA) the chain is on the extracellular side. The chain crosses the membrane as a helical span at residues 606–626 (VWNIIWLSFLSFLVVIISLIF). Topologically, residues 627–659 (KSIDENTEYTVSVKEIESIENRHLENVQKAGLK) are cytoplasmic.

The protein belongs to the heme-copper respiratory oxidase family. The cytochrome bo(3) ubiquinol oxidase complex is a heterooctamer of two A chains, two B chains, two C chains and two D chains. Cu(2+) serves as cofactor. Heme b is required as a cofactor. Requires Fe(II)-heme o as cofactor.

The protein resides in the cell membrane. The enzyme catalyses 2 a ubiquinol + O2 + n H(+)(in) = 2 a ubiquinone + 2 H2O + n H(+)(out). Its function is as follows. Cytochrome bo(3) ubiquinol oxidase is the terminal enzyme in the aerobic respiratory chain. Catalyzes the four-electron reduction of O2 to water, using a ubiquinol as a membrane soluble electron donor for molecular oxygen reduction. Has proton pump activity across the membrane in addition to electron transfer, pumping 2 protons/electron and generating a proton motive force. All the redox centers of this enzyme complex are located within the largest subunit, subunit I. Protons are probably pumped via D- and K- channels found in this subunit. The sequence is that of Cytochrome bo(3) ubiquinol oxidase subunit 1 (cyoB) from Buchnera aphidicola subsp. Schizaphis graminum (strain Sg).